The sequence spans 151 residues: UPF0178 protein PMI1258 (151 aa).

It belongs to the UPF0178 family.

The polypeptide is UPF0178 protein PMI1258 (Proteus mirabilis (strain HI4320)).